A 391-amino-acid polypeptide reads, in one-letter code: Serpin-ZX (391 aa).

An RCL region spans residues 337 to 361; sequence GTEAAAASAGVIKLRGLLMEEDEID. The N-linked (GlcNAc...) asparagine glycan is linked to Asn-375.

Belongs to the serpin family. As to quaternary structure, interacts with RD21A. In terms of tissue distribution, expressed in root tips. Expressed in siliques (at protein level).

The protein localises to the secreted. It localises to the extracellular space. It is found in the apoplast. The protein resides in the cytoplasm. Functionally, inhibits metacaspase-9 (MC9) cysteine protease. Functions through cleavage of its reactive center loop and covalent binding to MC9. Involved in the control of elicitor-stimulated programmed cell death (PCD). During infection by the necrotrophic fungal pathogen Botrytis cinerea, functions to protect cells by limiting the PCD-promoting protease RD21A activity that is released from the ER body or vacuole to the cytoplasm. Involved in the control of water stress-induced cell death by limiting the pro-death protease RD21A activity that is released from the vacuole to the cytoplasm. The sequence is that of Serpin-ZX from Arabidopsis thaliana (Mouse-ear cress).